We begin with the raw amino-acid sequence, 381 residues long: Alkanesulfonate monooxygenase (381 aa).

Belongs to the SsuD family. Homotetramer.

It carries out the reaction an alkanesulfonate + FMNH2 + O2 = an aldehyde + FMN + sulfite + H2O + 2 H(+). In terms of biological role, catalyzes the desulfonation of aliphatic sulfonates. The protein is Alkanesulfonate monooxygenase of Shigella flexneri serotype 5b (strain 8401).